The primary structure comprises 608 residues: DNA mismatch repair protein MutL (608 aa).

Belongs to the DNA mismatch repair MutL/HexB family.

Its function is as follows. This protein is involved in the repair of mismatches in DNA. It is required for dam-dependent methyl-directed DNA mismatch repair. May act as a 'molecular matchmaker', a protein that promotes the formation of a stable complex between two or more DNA-binding proteins in an ATP-dependent manner without itself being part of a final effector complex. The protein is DNA mismatch repair protein MutL of Anaeromyxobacter dehalogenans (strain 2CP-C).